The primary structure comprises 236 residues: 1-(5-phosphoribosyl)-5-[(5-phosphoribosylamino)methylideneamino] imidazole-4-carboxamide isomerase (236 aa).

The active-site Proton acceptor is D8. Residue D129 is the Proton donor of the active site.

It belongs to the HisA/HisF family.

Its subcellular location is the cytoplasm. The catalysed reaction is 1-(5-phospho-beta-D-ribosyl)-5-[(5-phospho-beta-D-ribosylamino)methylideneamino]imidazole-4-carboxamide = 5-[(5-phospho-1-deoxy-D-ribulos-1-ylimino)methylamino]-1-(5-phospho-beta-D-ribosyl)imidazole-4-carboxamide. It functions in the pathway amino-acid biosynthesis; L-histidine biosynthesis; L-histidine from 5-phospho-alpha-D-ribose 1-diphosphate: step 4/9. This chain is 1-(5-phosphoribosyl)-5-[(5-phosphoribosylamino)methylideneamino] imidazole-4-carboxamide isomerase, found in Ruminiclostridium cellulolyticum (strain ATCC 35319 / DSM 5812 / JCM 6584 / H10) (Clostridium cellulolyticum).